A 449-amino-acid chain; its full sequence is UDP-N-acetylmuramoylalanine--D-glutamate ligase (449 aa).

An ATP-binding site is contributed by 118-124 (GTNGKTT).

It belongs to the MurCDEF family.

The protein resides in the cytoplasm. The catalysed reaction is UDP-N-acetyl-alpha-D-muramoyl-L-alanine + D-glutamate + ATP = UDP-N-acetyl-alpha-D-muramoyl-L-alanyl-D-glutamate + ADP + phosphate + H(+). The protein operates within cell wall biogenesis; peptidoglycan biosynthesis. Cell wall formation. Catalyzes the addition of glutamate to the nucleotide precursor UDP-N-acetylmuramoyl-L-alanine (UMA). The protein is UDP-N-acetylmuramoylalanine--D-glutamate ligase of Staphylococcus aureus (strain MSSA476).